The following is a 149-amino-acid chain: Probable glycine cleavage system H protein 2 (149 aa).

Residues Ile32–Lys114 form the Lipoyl-binding domain. Lys73 carries the post-translational modification N6-lipoyllysine.

This sequence belongs to the GcvH family. The glycine cleavage system is composed of four proteins: P, T, L and H. (R)-lipoate is required as a cofactor.

The glycine cleavage system catalyzes the degradation of glycine. The H protein shuttles the methylamine group of glycine from the P protein to the T protein. In Sulfolobus acidocaldarius (strain ATCC 33909 / DSM 639 / JCM 8929 / NBRC 15157 / NCIMB 11770), this protein is Probable glycine cleavage system H protein 2.